Consider the following 408-residue polypeptide: Aminoacylase-1 (408 aa).

Residue H76 coordinates Zn(2+). D78 is an active-site residue. A Zn(2+)-binding site is contributed by D109. The active-site Proton acceptor is E143. Positions 144, 172, and 379 each coordinate Zn(2+).

This sequence belongs to the peptidase M20A family. Homodimer. Zn(2+) is required as a cofactor.

The protein resides in the cytoplasm. It catalyses the reaction an N-acyl-L-amino acid + H2O = an L-alpha-amino acid + a carboxylate. The enzyme catalyses an N-acetyl-L-cysteine-S-conjugate + H2O = an S-substituted L-cysteine + acetate. Involved in the hydrolysis of N-acylated or N-acetylated amino acids (except L-aspartate). This Dictyostelium discoideum (Social amoeba) protein is Aminoacylase-1 (acy1).